A 168-amino-acid polypeptide reads, in one-letter code: uncharacterized protein (168 aa).

4Fe-4S ferredoxin-type domains are found at residues 48-78 and 91-122; these read KIPK…MIPI and KIPK…ISPI. 8 residues coordinate [4Fe-4S] cluster: cysteine 58, cysteine 61, cysteine 64, cysteine 68, cysteine 100, cysteine 103, cysteine 106, and cysteine 110.

This is an uncharacterized protein from Methanocaldococcus jannaschii (strain ATCC 43067 / DSM 2661 / JAL-1 / JCM 10045 / NBRC 100440) (Methanococcus jannaschii).